The chain runs to 98 residues: NADH-ubiquinone oxidoreductase chain 4L (98 aa).

Transmembrane regions (helical) follow at residues 1 to 21 (MSMV…GLLM), 29 to 49 (SLLC…LTIL), and 61 to 81 (IILL…LVMV).

It belongs to the complex I subunit 4L family. In terms of assembly, core subunit of respiratory chain NADH dehydrogenase (Complex I) which is composed of 45 different subunits.

The protein resides in the mitochondrion inner membrane. It carries out the reaction a ubiquinone + NADH + 5 H(+)(in) = a ubiquinol + NAD(+) + 4 H(+)(out). Its function is as follows. Core subunit of the mitochondrial membrane respiratory chain NADH dehydrogenase (Complex I) which catalyzes electron transfer from NADH through the respiratory chain, using ubiquinone as an electron acceptor. Part of the enzyme membrane arm which is embedded in the lipid bilayer and involved in proton translocation. This Bos indicus (Zebu) protein is NADH-ubiquinone oxidoreductase chain 4L (MT-ND4L).